The following is a 272-amino-acid chain: Phosphatidylglycerol--prolipoprotein diacylglyceryl transferase (272 aa).

A run of 7 helical transmembrane segments spans residues Leu-17–Gly-37, Met-59–Tyr-79, Trp-95–Phe-115, Phe-129–Gly-149, Ser-176–Ala-196, Met-202–Phe-222, and Leu-237–Trp-257. Arg-142 provides a ligand contact to a 1,2-diacyl-sn-glycero-3-phospho-(1'-sn-glycerol).

The protein belongs to the Lgt family.

It localises to the cell inner membrane. The catalysed reaction is L-cysteinyl-[prolipoprotein] + a 1,2-diacyl-sn-glycero-3-phospho-(1'-sn-glycerol) = an S-1,2-diacyl-sn-glyceryl-L-cysteinyl-[prolipoprotein] + sn-glycerol 1-phosphate + H(+). It functions in the pathway protein modification; lipoprotein biosynthesis (diacylglyceryl transfer). In terms of biological role, catalyzes the transfer of the diacylglyceryl group from phosphatidylglycerol to the sulfhydryl group of the N-terminal cysteine of a prolipoprotein, the first step in the formation of mature lipoproteins. This chain is Phosphatidylglycerol--prolipoprotein diacylglyceryl transferase, found in Cupriavidus necator (strain ATCC 17699 / DSM 428 / KCTC 22496 / NCIMB 10442 / H16 / Stanier 337) (Ralstonia eutropha).